We begin with the raw amino-acid sequence, 581 residues long: 2-succinyl-5-enolpyruvyl-6-hydroxy-3-cyclohexene-1-carboxylate synthase (581 aa).

The protein belongs to the TPP enzyme family. MenD subfamily. Homodimer. Mg(2+) serves as cofactor. Mn(2+) is required as a cofactor. The cofactor is thiamine diphosphate.

It catalyses the reaction isochorismate + 2-oxoglutarate + H(+) = 5-enolpyruvoyl-6-hydroxy-2-succinyl-cyclohex-3-ene-1-carboxylate + CO2. The protein operates within quinol/quinone metabolism; 1,4-dihydroxy-2-naphthoate biosynthesis; 1,4-dihydroxy-2-naphthoate from chorismate: step 2/7. It participates in cofactor biosynthesis; phylloquinone biosynthesis. Catalyzes the thiamine diphosphate-dependent decarboxylation of 2-oxoglutarate and the subsequent addition of the resulting succinic semialdehyde-thiamine pyrophosphate anion to isochorismate to yield 2-succinyl-5-enolpyruvyl-6-hydroxy-3-cyclohexene-1-carboxylate (SEPHCHC). This chain is 2-succinyl-5-enolpyruvyl-6-hydroxy-3-cyclohexene-1-carboxylate synthase, found in Gloeothece citriformis (strain PCC 7424) (Cyanothece sp. (strain PCC 7424)).